The primary structure comprises 1097 residues: DNA-directed RNA polymerase subunit beta (1097 aa).

Positions 1072–1097 (QDVNPRRSTPSRPTYESLGVADYDED) are disordered.

Belongs to the RNA polymerase beta chain family. In cyanobacteria the RNAP catalytic core is composed of 2 alpha, 1 beta, 1 beta', 1 gamma and 1 omega subunit. When a sigma factor is associated with the core the holoenzyme is formed, which can initiate transcription.

The catalysed reaction is RNA(n) + a ribonucleoside 5'-triphosphate = RNA(n+1) + diphosphate. Functionally, DNA-dependent RNA polymerase catalyzes the transcription of DNA into RNA using the four ribonucleoside triphosphates as substrates. The protein is DNA-directed RNA polymerase subunit beta of Synechococcus sp. (strain CC9902).